Here is a 471-residue protein sequence, read N- to C-terminus: Mitochondrial distribution and morphology protein 10 (471 aa).

The tract at residues 313 to 338 (SNSAATPPRIKNSDSQVLSNNSTDSK) is disordered. Over residues 325-338 (SDSQVLSNNSTDSK) the composition is skewed to polar residues.

Belongs to the MDM10 family. Component of the ER-mitochondria encounter structure (ERMES) or MDM complex, composed of MMM1, MDM10, MDM12 and MDM34. Associates with the mitochondrial outer membrane sorting assembly machinery SAM(core) complex.

The protein localises to the mitochondrion outer membrane. Functionally, component of the ERMES/MDM complex, which serves as a molecular tether to connect the endoplasmic reticulum and mitochondria. Components of this complex are involved in the control of mitochondrial shape and protein biogenesis and may function in phospholipid exchange. MDM10 is involved in the late assembly steps of the general translocase of the mitochondrial outer membrane (TOM complex). Functions in the TOM40-specific route of the assembly of outer membrane beta-barrel proteins, including the association of TOM40 with the receptor TOM22 and small TOM proteins. Can associate with the SAM(core) complex as well as the MDM12-MMM1 complex, both involved in late steps of the major beta-barrel assembly pathway, that is responsible for biogenesis of all outer membrane beta-barrel proteins. May act as a switch that shuttles between both complexes and channels precursor proteins into the TOM40-specific pathway. Plays a role in mitochondrial morphology and in the inheritance of mitochondria. This is Mitochondrial distribution and morphology protein 10 from Debaryomyces hansenii (strain ATCC 36239 / CBS 767 / BCRC 21394 / JCM 1990 / NBRC 0083 / IGC 2968) (Yeast).